Reading from the N-terminus, the 182-residue chain is Ferritin heavy chain (182 aa).

Met-1 bears the N-acetylmethionine mark. At Thr-2 the chain carries N-acetylthreonine; in Ferritin heavy chain, N-terminally processed. The 150-residue stretch at 11–160 folds into the Ferritin-like diiron domain; that stretch reads QNYHQDAEAA…DHVTNLRKMG (150 aa). Residues Glu-28, Glu-63, His-66, Glu-108, and Gln-142 each contribute to the Fe cation site.

This sequence belongs to the ferritin family. As to quaternary structure, oligomer of 24 subunits. There are two types of subunits: L (light) chain and H (heavy) chain. The major chain can be light or heavy, depending on the species and tissue type. The functional molecule forms a roughly spherical shell with a diameter of 12 nm and contains a central cavity into which the insoluble mineral iron core is deposited. Interacts with NCOA4; NCOA4 promotes targeting of the iron-binding ferritin complex to autolysosomes following starvation or iron depletion.

It localises to the cytoplasm. It is found in the cytoplasmic vesicle. Its subcellular location is the autophagosome. The protein resides in the autolysosome. The catalysed reaction is 4 Fe(2+) + O2 + 4 H(+) = 4 Fe(3+) + 2 H2O. Its function is as follows. Stores iron in a soluble, non-toxic, readily available form. Important for iron homeostasis. Has ferroxidase activity. Iron is taken up in the ferrous form and deposited as ferric hydroxides after oxidation. Also plays a role in delivery of iron to cells. Mediates iron uptake in capsule cells of the developing kidney. Degraded to release iron upon autophagy activation by nutrient starvation. This chain is Ferritin heavy chain (Fth1), found in Mus musculus (Mouse).